The chain runs to 126 residues: Fatty acid-binding protein, liver (126 aa).

Cholate is bound by residues 54 to 56 (TPN), 99 to 101 (HEQ), and R121.

Belongs to the calycin superfamily. Fatty-acid binding protein (FABP) family.

It is found in the cytoplasm. In terms of biological role, FABPs are thought to play a role in the intracellular transport of long-chain fatty acids and their acyl-CoA esters. The polypeptide is Fatty acid-binding protein, liver (Anolis pulchellus (Common grass anole)).